Consider the following 125-residue polypeptide: uncharacterized protein (125 aa).

A helical membrane pass occupies residues 21 to 43 (KFSLIALVSFTALAIIVLYHNIS).

The protein localises to the membrane. This is an uncharacterized protein from Archaeoglobus fulgidus (strain ATCC 49558 / DSM 4304 / JCM 9628 / NBRC 100126 / VC-16).